The sequence spans 53 residues: Mannose/glucose-specific lectin alpha chain (53 aa).

This sequence belongs to the leguminous lectin family. In terms of assembly, heterodimer of an alpha and a beta chain.

Functionally, this lectin specifically binds mannose and glucose. The protein is Mannose/glucose-specific lectin alpha chain of Vicia cracca (Bird vetch).